We begin with the raw amino-acid sequence, 535 residues long: Light-independent protochlorophyllide reductase subunit B (535 aa).

Aspartate 36 is a binding site for [4Fe-4S] cluster. The active-site Proton donor is the aspartate 292. 428-429 is a substrate binding site; the sequence is GL. Residues 446–483 form a disordered region; sequence DEASPSESAPHASNGHEDVAGGSTAQSVPSHAATEGDG.

It belongs to the ChlB/BchB/BchZ family. As to quaternary structure, protochlorophyllide reductase is composed of three subunits; BchL, BchN and BchB. Forms a heterotetramer of two BchB and two BchN subunits. It depends on [4Fe-4S] cluster as a cofactor.

The catalysed reaction is chlorophyllide a + oxidized 2[4Fe-4S]-[ferredoxin] + 2 ADP + 2 phosphate = protochlorophyllide a + reduced 2[4Fe-4S]-[ferredoxin] + 2 ATP + 2 H2O. It functions in the pathway porphyrin-containing compound metabolism; bacteriochlorophyll biosynthesis (light-independent). Component of the dark-operative protochlorophyllide reductase (DPOR) that uses Mg-ATP and reduced ferredoxin to reduce ring D of protochlorophyllide (Pchlide) to form chlorophyllide a (Chlide). This reaction is light-independent. The NB-protein (BchN-BchB) is the catalytic component of the complex. The protein is Light-independent protochlorophyllide reductase subunit B of Chlorobium limicola (strain DSM 245 / NBRC 103803 / 6330).